Here is a 618-residue protein sequence, read N- to C-terminus: Mitochondrial Rho GTPase 1 (618 aa).

Over methionine 1–phenylalanine 592 the chain is Cytoplasmic. The Miro 1 domain occupies lysine 2–histidine 168. Residues arginine 14, glycine 16, lysine 17, threonine 18, and serine 19 each coordinate GTP. Residue threonine 18 coordinates Mg(2+). The Mg(2+) site is built by proline 35 and aspartate 57. Serine 59 contributes to the GTP binding site. Lysine 92 carries the N6-acetyllysine modification. GTP contacts are provided by asparagine 118, lysine 119, aspartate 121, alanine 149, and lysine 150. Lysine 153 is covalently cross-linked (Glycyl lysine isopeptide (Lys-Gly) (interchain with G-Cter in ubiquitin)). An EF-hand 1 domain is found at alanine 184–threonine 219. 5 residues coordinate Ca(2+): aspartate 197, aspartate 199, aspartate 201, threonine 203, and glutamate 208. Residue lysine 235 forms a Glycyl lysine isopeptide (Lys-Gly) (interchain with G-Cter in ubiquitin) linkage. An EF-hand 2 domain is found at histidine 304–isoleucine 339. The Ca(2+) site is built by aspartate 317, aspartate 319, aspartate 321, alanine 323, and glutamate 328. In terms of domain architecture, Miro 2 spans arginine 416–tyrosine 579. GTP is bound by residues asparagine 428, cysteine 429, glycine 430, lysine 431, serine 432, glycine 433, and lysine 447. Asparagine 428 contacts Mg(2+). Residues asparagine 428, cysteine 429, glycine 430, lysine 431, serine 432, glycine 433, lysine 447, lysine 454, serine 477, glutamate 478, lysine 528, aspartate 530, threonine 558, cysteine 559, and asparagine 560 each coordinate GDP. 4 residues coordinate GTP: lysine 528, aspartate 530, threonine 558, and cysteine 559. Lysine 572 is covalently cross-linked (Glycyl lysine isopeptide (Lys-Gly) (interchain with G-Cter in ubiquitin)). A helical; Anchor for type IV membrane protein membrane pass occupies residues tryptophan 593–leucine 615. Residues lysine 616–arginine 618 are Mitochondrial intermembrane-facing.

It belongs to the mitochondrial Rho GTPase family. Homodimer. Interacts with the kinesin-binding proteins TRAK1/OIP106 and TRAK2/GRIF1, forming a link between mitochondria and the trafficking apparatus of the microtubules. Interacts with RAP1GDS1. Interacts with ARMCX1. Found in a complex with KIF5B, OGT, RHOT2 and TRAK1. Post-translationally, ubiquitinated by PRKN during mitophagy, leading to its degradation and enhancement of mitophagy. Deubiquitinated by USP30. In terms of processing, acetylation on Lys-92 decreases sensitivity of mitochondrial transport to elevated Ca(2+) levels, increases mitochondrial transport and promotes axon growth. Deacetylated by HDAC6 which blocks mitochondrial transport and mediates axon growth inhibition. As to expression, ubiquitously expressed. Expressed at high level in heart and skeletal muscle.

It localises to the mitochondrion outer membrane. It catalyses the reaction GTP + H2O = GDP + phosphate + H(+). The catalysed reaction is ATP + H2O = ADP + phosphate + H(+). The enzyme catalyses UTP + H2O = UDP + phosphate + H(+). In terms of biological role, atypical mitochondrial nucleoside-triphosphatase (NTPase) involved in mitochondrial trafficking. Probably involved in control of anterograde transport of mitochondria and their subcellular distribution. Promotes mitochondrial fission during high calcium conditions. Can hydrolyze GTP, ATP and UTP. This Homo sapiens (Human) protein is Mitochondrial Rho GTPase 1 (RHOT1).